The primary structure comprises 337 residues: 4-hydroxythreonine-4-phosphate dehydrogenase (337 aa).

Substrate-binding residues include His-139 and Thr-140. A divalent metal cation-binding residues include His-173, His-218, and His-273. 3 residues coordinate substrate: Lys-281, Asn-290, and Arg-299.

This sequence belongs to the PdxA family. As to quaternary structure, homodimer. The cofactor is Zn(2+). It depends on Mg(2+) as a cofactor. Co(2+) serves as cofactor.

It is found in the cytoplasm. The catalysed reaction is 4-(phosphooxy)-L-threonine + NAD(+) = 3-amino-2-oxopropyl phosphate + CO2 + NADH. Its pathway is cofactor biosynthesis; pyridoxine 5'-phosphate biosynthesis; pyridoxine 5'-phosphate from D-erythrose 4-phosphate: step 4/5. In terms of biological role, catalyzes the NAD(P)-dependent oxidation of 4-(phosphooxy)-L-threonine (HTP) into 2-amino-3-oxo-4-(phosphooxy)butyric acid which spontaneously decarboxylates to form 3-amino-2-oxopropyl phosphate (AHAP). This is 4-hydroxythreonine-4-phosphate dehydrogenase from Rhodopseudomonas palustris (strain ATCC BAA-98 / CGA009).